The sequence spans 314 residues: Putative S-adenosyl-L-methionine-dependent methyltransferase MAV_4441 (314 aa).

S-adenosyl-L-methionine is bound by residues Asp138 and 167–168; that span reads DL.

This sequence belongs to the UPF0677 family.

Its function is as follows. Exhibits S-adenosyl-L-methionine-dependent methyltransferase activity. This Mycobacterium avium (strain 104) protein is Putative S-adenosyl-L-methionine-dependent methyltransferase MAV_4441.